Reading from the N-terminus, the 239-residue chain is uncharacterized protein (239 aa).

Its subcellular location is the endoplasmic reticulum. It is found in the golgi apparatus. This is an uncharacterized protein from Schizosaccharomyces pombe (strain 972 / ATCC 24843) (Fission yeast).